The following is a 484-amino-acid chain: Aspartyl/glutamyl-tRNA(Asn/Gln) amidotransferase subunit B (484 aa).

Belongs to the GatB/GatE family. GatB subfamily. As to quaternary structure, heterotrimer of A, B and C subunits.

The catalysed reaction is L-glutamyl-tRNA(Gln) + L-glutamine + ATP + H2O = L-glutaminyl-tRNA(Gln) + L-glutamate + ADP + phosphate + H(+). It catalyses the reaction L-aspartyl-tRNA(Asn) + L-glutamine + ATP + H2O = L-asparaginyl-tRNA(Asn) + L-glutamate + ADP + phosphate + 2 H(+). Its function is as follows. Allows the formation of correctly charged Asn-tRNA(Asn) or Gln-tRNA(Gln) through the transamidation of misacylated Asp-tRNA(Asn) or Glu-tRNA(Gln) in organisms which lack either or both of asparaginyl-tRNA or glutaminyl-tRNA synthetases. The reaction takes place in the presence of glutamine and ATP through an activated phospho-Asp-tRNA(Asn) or phospho-Glu-tRNA(Gln). This is Aspartyl/glutamyl-tRNA(Asn/Gln) amidotransferase subunit B from Anaeromyxobacter dehalogenans (strain 2CP-C).